The primary structure comprises 172 residues: Large ribosomal subunit protein bL17m (172 aa).

The transit peptide at 1–8 (MRLSFAAA) directs the protein to the mitochondrion.

It belongs to the bacterial ribosomal protein bL17 family. In terms of assembly, component of the mitochondrial ribosome large subunit (39S) which comprises a 16S rRNA and about 50 distinct proteins.

The protein localises to the mitochondrion. This is Large ribosomal subunit protein bL17m (MRPL17) from Bos taurus (Bovine).